We begin with the raw amino-acid sequence, 587 residues long: 5-aminolevulinate synthase, erythroid-specific, mitochondrial (587 aa).

Residues 1-49 (MVTAAMLLQRCPVLIRSPTGLLGKMIKTHQFLFGIGRCPILATQGPSFS) constitute a mitochondrion transit peptide. A succinyl-CoA-binding site is contributed by R163. Residues C258 and F259 each contribute to the pyridoxal 5'-phosphate site. Succinyl-CoA is bound by residues S280 and K299. Pyridoxal 5'-phosphate contacts are provided by S332, H360, and T388. Residue K391 is part of the active site. K391 carries the N6-(pyridoxal phosphate)lysine modification. Pyridoxal 5'-phosphate contacts are provided by T420 and T421. T508 is a succinyl-CoA binding site.

Belongs to the class-II pyridoxal-phosphate-dependent aminotransferase family. Homodimer. Interacts with SUCLA2. It depends on pyridoxal 5'-phosphate as a cofactor.

It is found in the mitochondrion inner membrane. It carries out the reaction succinyl-CoA + glycine + H(+) = 5-aminolevulinate + CO2 + CoA. It participates in porphyrin-containing compound metabolism; protoporphyrin-IX biosynthesis; 5-aminolevulinate from glycine: step 1/1. In terms of biological role, catalyzes the pyridoxal 5'-phosphate (PLP)-dependent condensation of succinyl-CoA and glycine to form aminolevulinic acid (ALA), with CoA and CO2 as by-products. Contributes significantly to heme formation during erythropoiesis. The chain is 5-aminolevulinate synthase, erythroid-specific, mitochondrial (ALAS2) from Bos taurus (Bovine).